Reading from the N-terminus, the 339-residue chain is O-methyltransferase 7 (339 aa).

Residues G186, D209, S232, F233, and K246 each contribute to the S-adenosyl-L-methionine site. The Proton acceptor role is filled by H250.

The protein belongs to the class I-like SAM-binding methyltransferase superfamily. Cation-independent O-methyltransferase family. COMT subfamily.

It carries out the reaction (3,5-dichloro-2,4,6-trihydroxyphenyl)hexan-1-one + S-adenosyl-L-methionine = 1-(3,5-dichloro-2,6-dihydroxy-4-methoxyphenyl)hexan-1-one + S-adenosyl-L-homocysteine + H(+). The polypeptide is O-methyltransferase 7 (omt7) (Dictyostelium discoideum (Social amoeba)).